The chain runs to 4568 residues: Dynein beta chain, flagellar outer arm (4568 aa).

The stem stretch occupies residues 1–1880 (MAEDEGMTAA…QVNICDAEIA (1880 aa)). Coiled coils occupy residues 277–293 (FQRLFREVEAAQQEAND), 1158–1175 (EEAAAKKAAEEEEKRKAL), 1372–1400 (KIDVDFLVEETKKLSKDIKMLNKAVRNYD), 1614–1650 (EACTLDGRQERLENMQSMLEQCEKALQEYLETKRVAF), and 1778–1825 (QEIN…RKKL). The interval 1144–1166 (GVEEEPEYHPDQDPEEAAAKKAA) is disordered. Over residues 1150–1166 (EYHPDQDPEEAAAKKAA) the composition is skewed to basic and acidic residues. AAA regions lie at residues 1881–2102 (YSYE…TLYV), 2164–2385 (EAAH…RNFK), 2493–2738 (QYIP…ITQG), and 2841–3090 (EYNE…FRRY). Residues 1919–1926 (GPAGTGKT), 2202–2209 (GAAGCGKT), and 2530–2537 (GNTGTGKS) contribute to the ATP site. Residues 2831–2848 (LRKTLEDKLREYNESNAV) adopt a coiled-coil conformation. 2879-2886 (GVGGSGKQ) provides a ligand contact to ATP. 3 coiled-coil regions span residues 3106–3162 (KMLL…DELI), 3339–3425 (KRAA…RLES), and 3648–3728 (HERP…KARE). The stalk stretch occupies residues 3106–3425 (KMLLQLKRDD…WGAEIKRLES (320 aa)). AAA regions lie at residues 3481–3711 (LTDD…EIEE) and 3937–4172 (MGRF…TANN).

The protein belongs to the dynein heavy chain family. Consists of at least 3 heavy chains (alpha, beta and gamma), 2 intermediate chains and 8 light chains.

The protein localises to the cell projection. It is found in the cilium. The protein resides in the flagellum. It localises to the cytoplasm. Its subcellular location is the cytoskeleton. The protein localises to the flagellum axoneme. Force generating protein of eukaryotic cilia and flagella. Produces force towards the minus ends of microtubules. Dynein has ATPase activity; the force-producing power stroke is thought to occur on release of ADP. The sequence is that of Dynein beta chain, flagellar outer arm (ODA4) from Chlamydomonas reinhardtii (Chlamydomonas smithii).